Reading from the N-terminus, the 179-residue chain is Putative BPIFA4P protein (179 aa).

The N-terminal stretch at 1-20 (MLNVSGLFVLLCGLLVSSSA) is a signal peptide.

The protein belongs to the BPI/LBP/Plunc superfamily. Plunc family. In terms of tissue distribution, expressed in breast cancer and salivary gland.

The protein localises to the secreted. In terms of biological role, major protein in sweat, has surfactant properties. The protein is Putative BPIFA4P protein (BPIFA4P) of Homo sapiens (Human).